We begin with the raw amino-acid sequence, 217 residues long: Frizzled-8 (217 aa).

The Extracellular portion of the chain corresponds to 1–26; it reads AGAAELQPELAVAEHVRYESTGPALC. Residues 27–47 traverse the membrane as a helical segment; sequence TVVFLLVYFFGMASSIWWVIL. The Cytoplasmic portion of the chain corresponds to 48 to 69; that stretch reads SLTWFLAAGMKWGNEAIAGYAQ. A helical membrane pass occupies residues 70–90; it reads YFHLAAWLLPSVKSIAVLALS. Residues 91–113 are Extracellular-facing; it reads SVDGDPVAGICYVGNQSLENLRG. N105 carries an N-linked (GlcNAc...) asparagine glycan. Residues 114-134 traverse the membrane as a helical segment; it reads FVLAPLVVYLFTGSLFLLAGF. At 135–160 the chain is on the cytoplasmic side; the sequence is VSLFRIRSVIKQGGTKTDKLEKLMIR. Residues 161–181 form a helical membrane-spanning segment; that stretch reads IGIFTVLYTVPATIVIACYIY. Over 182-209 the chain is Extracellular; sequence EQHNREAWEQAQNCSCPGDPHRPKPDYA. Residue N194 is glycosylated (N-linked (GlcNAc...) asparagine). A helical transmembrane segment spans residues 210–217; sequence VFMLKYFM.

The protein belongs to the G-protein coupled receptor Fz/Smo family.

It is found in the membrane. It localises to the cell membrane. Receptor for Wnt proteins. Most of frizzled receptors are coupled to the beta-catenin canonical signaling pathway, which leads to the activation of disheveled proteins, inhibition of GSK-3 kinase, nuclear accumulation of beta-catenin and activation of Wnt target genes. A second signaling pathway involving PKC and calcium fluxes has been seen for some family members, but it is not yet clear if it represents a distinct pathway or if it can be integrated in the canonical pathway, as PKC seems to be required for Wnt-mediated inactivation of GSK-3 kinase. Both pathways seem to involve interactions with G-proteins. May be involved in transduction and intercellular transmission of polarity information during tissue morphogenesis and/or in differentiated tissues. The sequence is that of Frizzled-8 (FZD8) from Gallus gallus (Chicken).